A 272-amino-acid polypeptide reads, in one-letter code: Glutamate racemase (272 aa).

Residues 10–11 (DS) and 42–43 (YG) each bind substrate. Residue cysteine 74 is the Proton donor/acceptor of the active site. Position 75–76 (75–76 (NT)) interacts with substrate. The Proton donor/acceptor role is filled by cysteine 185. Residue 186-187 (TH) coordinates substrate.

The protein belongs to the aspartate/glutamate racemases family.

It carries out the reaction L-glutamate = D-glutamate. It participates in cell wall biogenesis; peptidoglycan biosynthesis. In terms of biological role, provides the (R)-glutamate required for cell wall biosynthesis. The protein is Glutamate racemase of Bacillus pumilus (strain SAFR-032).